The following is a 703-amino-acid chain: Fanconi anemia group B protein homolog (703 aa).

Belongs to the multisubunit FA complex composed of FANCA, FANCB, FANCC, FANCE, FANCF, FANCG, FANCL/PHF9 and FANCM.

Its subcellular location is the nucleus. DNA repair protein required for FANCD2 ubiquitination. This Mus musculus (Mouse) protein is Fanconi anemia group B protein homolog (Fancb).